The following is a 250-amino-acid chain: tRNA (guanine-N(1)-)-methyltransferase (250 aa).

S-adenosyl-L-methionine contacts are provided by residues glycine 116 and 136-141 (IGDYVL).

This sequence belongs to the RNA methyltransferase TrmD family. Homodimer.

It is found in the cytoplasm. It catalyses the reaction guanosine(37) in tRNA + S-adenosyl-L-methionine = N(1)-methylguanosine(37) in tRNA + S-adenosyl-L-homocysteine + H(+). Specifically methylates guanosine-37 in various tRNAs. In Stutzerimonas stutzeri (strain A1501) (Pseudomonas stutzeri), this protein is tRNA (guanine-N(1)-)-methyltransferase.